Reading from the N-terminus, the 265-residue chain is Glutamate racemase (265 aa).

Substrate contacts are provided by residues 12–13 (DS) and 44–45 (YG). C75 (proton donor/acceptor) is an active-site residue. 76–77 (NT) lines the substrate pocket. Residue C186 is the Proton donor/acceptor of the active site. Position 187-188 (187-188 (TH)) interacts with substrate.

The protein belongs to the aspartate/glutamate racemases family.

It carries out the reaction L-glutamate = D-glutamate. It participates in cell wall biogenesis; peptidoglycan biosynthesis. Its function is as follows. Provides the (R)-glutamate required for cell wall biosynthesis. This chain is Glutamate racemase, found in Pseudomonas putida (strain W619).